The primary structure comprises 482 residues: Probable cytosol aminopeptidase (482 aa).

Mn(2+)-binding residues include K251 and D256. The active site involves K263. Mn(2+)-binding residues include D274, D333, and E335. Residue R337 is part of the active site.

This sequence belongs to the peptidase M17 family. The cofactor is Mn(2+).

It localises to the cytoplasm. It carries out the reaction Release of an N-terminal amino acid, Xaa-|-Yaa-, in which Xaa is preferably Leu, but may be other amino acids including Pro although not Arg or Lys, and Yaa may be Pro. Amino acid amides and methyl esters are also readily hydrolyzed, but rates on arylamides are exceedingly low.. It catalyses the reaction Release of an N-terminal amino acid, preferentially leucine, but not glutamic or aspartic acids.. Presumably involved in the processing and regular turnover of intracellular proteins. Catalyzes the removal of unsubstituted N-terminal amino acids from various peptides. The sequence is that of Probable cytosol aminopeptidase from Acinetobacter baumannii (strain AB307-0294).